The chain runs to 70 residues: Large ribosomal subunit protein uL29 (70 aa).

It belongs to the universal ribosomal protein uL29 family.

The protein is Large ribosomal subunit protein uL29 of Prochlorococcus marinus (strain MIT 9211).